The chain runs to 757 residues: MDVNPTLLFLKVPAQNAISTTFPYTGDPPYSHGTGTGYTMDTVNRTHQYSERGKWTTNTETGAPQLNPIDGPLPEDNEPSGYAQTDCVLEAMAFLEESHPGIFENSCLETMEVVQQTRVDKLTQGRQTYDWTLNRNQPAATALANTIEVFRSNGLTANESGRLIDFLKDVMESMDKEEMEITTHFQRKRRVRDNMTKRMVTQRTIGKKKQRLNKRSYLIRALTLNTMTKDAERGKLKRRAIATPGMQIRGFVYFVEALARSICEKLEQSGLPVGGNEKKAKLANVVRKMMTNSQDTELSFTITGDNTKWNENQNPRMFLAMITYITRNQPKWFRNVLSIAPIMFSNKMARLGKGYMFESKSMKLRTQIPAEMLATIDLKYFNDSTRKKIEKIRPLLIDGTASLSPGMMMGMFNMLSTVLGVSILNLGQKRYTKTTYWWDGLQSSDDFALIVNAPNHEGIQAGVDRFYRTCKLVGINMSKKKSYINRTGTFEFTSFFYRYGFVANFSMELPSFGVSGINESADMSIGVTVIKNNMINNDLGPATAQMALQLFIKDYRYTYRCHRGDTQIQTRRSFEIKKLWEQTRSKAGLLVSDGGPNLYNIRNLHIPEVCLKWELMDEDYQGRLCNPLNPFVSHKEIESVNNAVVMPAHGPAKSMEYDAVATTHSWIPKRNRSILNTSQRGILEDEQMYQKCCNLFEKFFPSSSYRRPVGISSMVEAMVSRARIDARIDFESGRIKKEEFAEIMKICSTIEELRRQK.

Residues 52-82 (RGKWTTNTETGAPQLNPIDGPLPEDNEPSGY) are disordered. The span at 55 to 64 (WTTNTETGAP) shows a compositional bias: polar residues. 2 short sequence motifs (nuclear localization signal) span residues 187–195 (RKRRVRDNM) and 203–216 (RTIG…NKRS). The promoter-binding site stretch occupies residues 249 to 256 (RGFVYFVE). The region spanning 286–483 (VRKMMTNSQD…GINMSKKKSY (198 aa)) is the RdRp catalytic domain.

The protein belongs to the influenza viruses polymerase PB1 family. Influenza RNA polymerase is composed of three subunits: PB1, PB2 and PA. Interacts (via N-terminus) with PA (via C-terminus). Interacts (via C-terminus) with PB2 (via N-terminus); this interaction is essential for transcription initiation. Phosphorylated by host PRKCA.

The protein localises to the host nucleus. The protein resides in the host cytoplasm. It carries out the reaction RNA(n) + a ribonucleoside 5'-triphosphate = RNA(n+1) + diphosphate. Functionally, RNA-dependent RNA polymerase which is responsible for replication and transcription of virus RNA segments. The transcription of viral mRNAs occurs by a unique mechanism called cap-snatching. 5' methylated caps of cellular mRNAs are cleaved after 10-13 nucleotides by PA. In turn, these short capped RNAs are used as primers by PB1 for transcription of viral mRNAs. During virus replication, PB1 initiates RNA synthesis and copy vRNA into complementary RNA (cRNA) which in turn serves as a template for the production of more vRNAs. The protein is RNA-directed RNA polymerase catalytic subunit of Aves.